The sequence spans 984 residues: Ephrin type-B receptor 1 (984 aa).

A signal peptide spans 1 to 17 (MALDYLLLLLLASAVAA). The Extracellular portion of the chain corresponds to 18-540 (MEETLMDTRT…YKSELREQLP (523 aa)). An Eph LBD domain is found at 19–201 (EETLMDTRTA…FFKKCPSIVQ (183 aa)). Fibronectin type-III domains follow at residues 322–432 (VPSG…TNQA) and 433–528 (APST…TLTD). N-linked (GlcNAc...) asparagine glycosylation is found at asparagine 334, asparagine 426, and asparagine 480. A helical transmembrane segment spans residues 541–563 (LIAGSAAAGVVFVVSLVAISIVC). The Cytoplasmic segment spans residues 564 to 984 (SRKRAYSKEA…QISQSPTAMA (421 aa)). Phosphotyrosine is present on tyrosine 600. The Protein kinase domain maps to 619 to 882 (VKIEEVIGAG…EIVNTLDKMI (264 aa)). Residues 625-633 (IGAGEFGEV) and lysine 651 contribute to the ATP site. Catalysis depends on aspartate 744, which acts as the Proton acceptor. The region spanning 911-975 (TAFTTVDDWL…LNSIHSMRVQ (65 aa)) is the SAM domain. Phosphotyrosine; by autocatalysis is present on tyrosine 928. A PDZ-binding motif is present at residues 982–984 (AMA).

Belongs to the protein kinase superfamily. Tyr protein kinase family. Ephrin receptor subfamily. As to quaternary structure, heterotetramer upon binding of the ligand. The heterotetramer is composed of an ephrin dimer and a receptor dimer. Oligomerization is probably required to induce biological responses. Interacts with EPHB6; transphosphorylates EPHB6 to form an active signaling complex. Interacts with PICK1. Interacts (through Tyr-594) with NCK1 (via SH2 domain); activates the JUN cascade to regulate cell adhesion. The ligand-activated form interacts (through Tyr-928) with GRB7 and GRB10 (via SH2 domains). The ligand-activated form interacts (residues within the catalytic domain) with GRB2 (via SH2 domain). Interacts with GRB2, SHC1 and SRC; activates the MAPK/ERK cascade to regulate cell migration. Interacts with CBL; regulates receptor degradation through ubiquitination. Interacts with ACP1. Post-translationally, phosphorylated. Autophosphorylation is stimulated by the ligand EFNB1. Required for interaction with SH2 domain-containing interactors, for activation of the MAPK/ERK and JUN signaling cascades and for ubiquitination by CBL. Ubiquitinated; (EFNB1)ligand-induced poly- and/or multi-ubiquitination by CBL is regulated by SRC and leads to lysosomal degradation. In terms of tissue distribution, preferentially expressed in brain.

It is found in the cell membrane. Its subcellular location is the early endosome membrane. It localises to the cell projection. The protein localises to the dendrite. The enzyme catalyses L-tyrosyl-[protein] + ATP = O-phospho-L-tyrosyl-[protein] + ADP + H(+). In terms of biological role, receptor tyrosine kinase which binds promiscuously transmembrane ephrin-B family ligands residing on adjacent cells, leading to contact-dependent bidirectional signaling into neighboring cells. The signaling pathway downstream of the receptor is referred to as forward signaling while the signaling pathway downstream of the ephrin ligand is referred to as reverse signaling. Cognate/functional ephrin ligands for this receptor include EFNB1, EFNB2 and EFNB3. During nervous system development, regulates retinal axon guidance redirecting ipsilaterally ventrotemporal retinal ganglion cells axons at the optic chiasm midline. This probably requires repulsive interaction with EFNB2. In the adult nervous system together with EFNB3, regulates chemotaxis, proliferation and polarity of the hippocampus neural progenitors. In addition to its role in axon guidance also plays an important redundant role with other ephrin-B receptors in development and maturation of dendritic spines and synapse formation. May also regulate angiogenesis. More generally, may play a role in targeted cell migration and adhesion. Upon activation by EFNB1 and probably other ephrin-B ligands activates the MAPK/ERK and the JNK signaling cascades to regulate cell migration and adhesion respectively. Involved in the maintenance of the pool of satellite cells (muscle stem cells) by promoting their self-renewal and reducing their activation and differentiation. The sequence is that of Ephrin type-B receptor 1 (EPHB1) from Homo sapiens (Human).